We begin with the raw amino-acid sequence, 1198 residues long: MDKLPPSMRKRLYSLPQQVGAKAWIMDEEEDGEEEGAGGLQDPSRRSIRLRPLPSPSPSVAAGCSESRGAALGAADSEGPGRSAGKSSTNGDCRRFRGSLASLGSRGGGSGGAGGGSSLGHLHDSAEERRLIAAEGDASPGEDRTPPGLATEPERPGAAAQPAASPPPQQPPQPASASCEQPSADTAIKVEGGAAASDQILPEAEVRLGQSGFMQRQFGAMLQPGVNKFSLRMFGSQKAVEREQERVKSAGFWIIHPYSDFRFYWDLTMLLLMVGNLIIIPVGITFFKDENTTPWIVFNVVSDTFFLIDLVLNFRTGIVVEDNTEIILDPQRIKMKYLKSWFVVDFISSIPVDYIFLIVETRIDSEVYKTARALRIVRFTKILSLLRLLRLSRLIRYIHQWEEIFHMTYDLASAVVRIVNLIGMMLLLCHWDGCLQFLVPMLQDFPHDCWVSINGMVNNSWGKQYSYALFKAMSHMLCIGYGRQAPVGMSDVWLTMLSMIVGATCYAMFIGHATALIQSLDSSRRQYQEKYKQVEQYMSFHKLPPDTRQRIHDYYEHRYQGKMFDEESILGELSEPLREEIINFNCRKLVASMPLFANADPNFVTSMLTKLRFEVFQPGDYIIREGTIGKKMYFIQHGVVSVLTKGNKETKLADGSYFGEICLLTRGRRTASVRADTYCRLYSLSVDNFNEVLEEYPMMRRAFETVALDRLDRIGKKNSILLHKVQHDLNSGVFNYQENEIIQQIVRHDREMAHCAHRVQAAASATPTPTPVIWTPLIQAPLQAAAATTSVAIALTHHPRLPAAIFRPPPGPGLGNLGAGQTPRHPRRLQSLIPSALGSASPASSPSQVDTPSSSSFHIQQLAGFSAPPGLSPLLPSSSSSPPPGACSSPPAPTPSTSTAATTTGFGHFHKALGGSLSSSDSPLLTPLQPGARSPQAAQPPPPLPGARGGLGLLEHFLPPPPSSRSPSSSPGQLGQPPGELSPGLAAGPPSTPETPPRPERPSFMAGASGGASPVAFTPRGGLSPPGHSPGPPRTFPSAPPRASGSHGSLLLPPASSPPPPQVPQRRGTPPLTPGRLTQDLKLISASQPALPQDGAQTLRRASPHSSGESMAAFSLYPRAGGGSGSSGGLGPPGRPYGAIPGQHVTLPRKTSSGSLPPPLSLFGARAASSGGPPLTAAPQREPGARSEPVRSKLPSNL.

At 1-266 (MDKLPPSMRK…PYSDFRFYWD (266 aa)) the chain is on the cytoplasmic side. Residues 25 to 183 (IMDEEEDGEE…PASASCEQPS (159 aa)) are disordered. Positions 26 to 36 (MDEEEDGEEEG) are enriched in acidic residues. The span at 105-118 (SRGGGSGGAGGGSS) shows a compositional bias: gly residues. The segment covering 121 to 132 (HLHDSAEERRLI) has biased composition (basic and acidic residues). Ser-139 is subject to Phosphoserine. Residues 164 to 174 (ASPPPQQPPQP) show a composition bias toward pro residues. The interval 209-260 (GQSGFMQRQFGAMLQPGVNKFSLRMFGSQKAVEREQERVKSAGFWIIHPYSD) is involved in subunit assembly. Residues 267-287 (LTMLLLMVGNLIIIPVGITFF) traverse the membrane as a helical segment. Over 288-293 (KDENTT) the chain is Extracellular. A helical membrane pass occupies residues 294–314 (PWIVFNVVSDTFFLIDLVLNF). The Cytoplasmic segment spans residues 315 to 340 (RTGIVVEDNTEIILDPQRIKMKYLKS). A helical membrane pass occupies residues 341–361 (WFVVDFISSIPVDYIFLIVET). Over 362–368 (RIDSEVY) the chain is Extracellular. A helical; Voltage-sensor transmembrane segment spans residues 369-389 (KTARALRIVRFTKILSLLRLL). Residues 390-420 (RLSRLIRYIHQWEEIFHMTYDLASAVVRIVN) lie on the Cytoplasmic side of the membrane. A helical transmembrane segment spans residues 421–441 (LIGMMLLLCHWDGCLQFLVPM). Residues 442-464 (LQDFPHDCWVSINGMVNNSWGKQ) lie on the Extracellular side of the membrane. Asn-458 carries N-linked (GlcNAc...) asparagine glycosylation. Residues 465–486 (YSYALFKAMSHMLCIGYGRQAP) constitute an intramembrane region (pore-forming). Over 487-496 (VGMSDVWLTM) the chain is Extracellular. The helical transmembrane segment at 497 to 517 (LSMIVGATCYAMFIGHATALI) threads the bilayer. The Cytoplasmic segment spans residues 518 to 1198 (QSLDSSRRQY…PVRSKLPSNL (681 aa)). 4 residues coordinate 3',5'-cyclic GMP: Tyr-559, Lys-562, Phe-564, and Glu-566. Residues Gly-659, Glu-660, Cys-662, Arg-669, Thr-670, Val-673, and Arg-710 each coordinate 3',5'-cyclic AMP. Positions 804 to 1198 (AIFRPPPGPG…PVRSKLPSNL (395 aa)) are disordered. Composition is skewed to low complexity over residues 831 to 856 (SLIPSALGSASPASSPSQVDTPSSSS) and 866 to 880 (SAPPGLSPLLPSSSS). The span at 881–894 (SPPPGACSSPPAPT) shows a compositional bias: pro residues. 3 stretches are compositionally biased toward low complexity: residues 895–905 (PSTSTAATTTG), 913–937 (LGGSLSSSDSPLLTPLQPGARSPQA), and 965–985 (RSPSSSPGQLGQPPGELSPGL). Residues 1027 to 1040 (GHSPGPPRTFPSAP) are compositionally biased toward pro residues. Low complexity predominate over residues 1043–1054 (ASGSHGSLLLPP). Residues Ser-1103 and Ser-1106 each carry the phosphoserine modification. The span at 1120–1132 (AGGGSGSSGGLGP) shows a compositional bias: gly residues.

This sequence belongs to the potassium channel HCN family. Homotetramer. The potassium channel is composed of a homo- or heterotetrameric complex of pore-forming subunits. Interacts with PEX5L with a 4:4 HCN4:PEX5L stoichiometry; reduces the effects of cAMP on the voltage-dependence and rate of activation. Interacts with IRAG1; regulates HCN4 channel activity. Interacts with IRAG2; regulates HCN4 channel activity. S-palmitoylated. In terms of tissue distribution, highly expressed in pyramidal and granule layer of the hippocampus, in thalamus anterior nucleus, in the supraoptic nucleus in hypothalamus, in cerebellum, and in trapezoid nuclei and superior olivary complex in the auditory system. Detected in a subset of elongated cells in taste buds.

The protein resides in the cell membrane. The enzyme catalyses K(+)(in) = K(+)(out). It carries out the reaction Na(+)(in) = Na(+)(out). With respect to regulation, activated by cAMP and at 100 times higher concentrationsand to a lesser extent by cGMP and cCMP. cAMP binding causes a conformation change that leads to the assembly of an active tetramer and channel opening. Binding of cAMP removes a tonic inhibition conferred by cyclic nucleotide-binding domain (CNBD) on channel opening. Cyclic dinucleotides can modulate HCN4 channel; cyclic dinucleotides acting as potent antagonists of cAMP. Inhibited by extracellular Cs(+) ions. Auxiliary subunits can also regulate HCN4 channel. IRAG1 causes a gain-of-function by shifting HCN4 activation to more depolarized membrane potentials in the absence of cAMP. In contrast, IRAG2 causes a loss-of-function by inhibiting cAMP-dependent potentiation of HCN4 activation. Functionally, hyperpolarization-activated ion channel that are permeable to Na(+) and K(+) ions with very slow activation and inactivation. Exhibits higher selectivity for K(+) over Na(+) ions. Contributes to the native pacemaker currents in heart (If) that regulate the rhythm of heart beat. Contributes to the native pacemaker currents in neurons (Ih). May mediate responses to sour stimuli. This Rattus norvegicus (Rat) protein is Potassium/sodium hyperpolarization-activated cyclic nucleotide-gated channel 4 (Hcn4).